The following is a 267-amino-acid chain: tRNA pseudouridine synthase A (267 aa).

The Nucleophile role is filled by Asp55. Tyr111 provides a ligand contact to substrate.

The protein belongs to the tRNA pseudouridine synthase TruA family.

It carries out the reaction uridine(38/39/40) in tRNA = pseudouridine(38/39/40) in tRNA. Functionally, formation of pseudouridine at positions 38, 39 and 40 in the anticodon stem and loop of transfer RNAs. The chain is tRNA pseudouridine synthase A from Thermococcus onnurineus (strain NA1).